The sequence spans 162 residues: Protein S40-4 (162 aa).

The protein belongs to the senescence regulator S40 family.

The protein resides in the cytoplasm. This chain is Protein S40-4, found in Arabidopsis thaliana (Mouse-ear cress).